The following is a 307-amino-acid chain: Small ribosomal subunit biogenesis GTPase RsgA (307 aa).

Residues 82-240 (GRYGERIVVA…IADTPGLREV (159 aa)) enclose the CP-type G domain. GTP is bound by residues 131-134 (NKAD) and 182-190 (GPSGVGKSS). Zn(2+)-binding residues include Cys-264, Cys-269, His-271, and Cys-277.

This sequence belongs to the TRAFAC class YlqF/YawG GTPase family. RsgA subfamily. In terms of assembly, monomer. Associates with 30S ribosomal subunit, binds 16S rRNA. The cofactor is Zn(2+).

The protein resides in the cytoplasm. One of several proteins that assist in the late maturation steps of the functional core of the 30S ribosomal subunit. Helps release RbfA from mature subunits. May play a role in the assembly of ribosomal proteins into the subunit. Circularly permuted GTPase that catalyzes slow GTP hydrolysis, GTPase activity is stimulated by the 30S ribosomal subunit. The chain is Small ribosomal subunit biogenesis GTPase RsgA from Gemmatimonas aurantiaca (strain DSM 14586 / JCM 11422 / NBRC 100505 / T-27).